The primary structure comprises 873 residues: Zinc fingers and homeoboxes protein 1 (873 aa).

Positions 24 to 63 (LISDLDEGPPVLTPVENTRAESISSDEEVHESVDSDNQQN) are disordered. At Thr-36 the chain carries Phosphothreonine. 3 positions are modified to phosphoserine: Ser-45, Ser-47, and Ser-48. C2H2-type zinc fingers lie at residues 70 to 93 (YECK…DSEH) and 102 to 125 (YVCV…LKYH). A Glycyl lysine isopeptide (Lys-Gly) (interchain with G-Cter in SUMO2) cross-link involves residue Lys-159. The disordered stretch occupies residues 198–236 (VHHNSVEDVPEEKENEIKPDREETVENPSSSASESNTST). At Ser-202 the chain carries Phosphoserine. Residues 212-221 (NEIKPDREET) show a composition bias toward basic and acidic residues. Positions 223-236 (ENPSSSASESNTST) are enriched in low complexity. The tract at residues 272–432 (NSNLIPKVLI…QNNVQKSQVP (161 aa)) is required for dimerization. Residues 272–564 (NSNLIPKVLI…VQPKQSWNPF (293 aa)) form a required for interaction with NFYA region. The segment at residues 284 to 346 (NSIPTYNAAL…LKHGVSWTPE (63 aa)) is a DNA-binding region (homeobox 1). The interval 431–454 (VPAAQPTAETKPATAAVPTSQSVK) is disordered. Residues Lys-441, Lys-454, and Lys-485 each participate in a glycyl lysine isopeptide (Lys-Gly) (interchain with G-Cter in SUMO2) cross-link. Positions 464–526 (SFGIRAKKTK…YNQRNSKSNQ (63 aa)) form a DNA-binding region, homeobox 2. Disordered stretches follow at residues 544–563 (DETT…SWNP), 626–668 (KEEK…CKKT), and 732–769 (SSMN…INNW). The segment covering 550 to 562 (PTVGTVQPKQSWN) has biased composition (polar residues). Residues 569 to 630 (PQKFKEKTAE…KSKALKEEKM (62 aa)) constitute a DNA-binding region (homeobox 3). Lys-629 is covalently cross-linked (Glycyl lysine isopeptide (Lys-Gly) (interchain with G-Cter in SUMO2)). Position 648 is a phosphoserine (Ser-648). Positions 660-722 (STGKICKKTP…YAWKNGNLKW (63 aa)) form a DNA-binding region, homeobox 4. The segment at 734–768 (MNGLSSLRKRGRGRPKGRGRGRPRGRPRGSKRINN) is required for nuclear localization. Over residues 740–764 (LRKRGRGRPKGRGRGRPRGRPRGSK) the composition is skewed to basic residues. The residue at position 774 (Ser-774) is a Phosphoserine. A DNA-binding region (homeobox 5) is located at residues 777–832 (KFKTGTAILKDYYLKHKFLNEQDLDELVNKSHMGYEQVREWFAERQRRSELGIELF). The disordered stretch occupies residues 829–873 (IELFEENEEEDEVIDDQEEDEEETDDSDTWEPPRHVKRKLSKSDD). Over residues 831 to 857 (LFEENEEEDEVIDDQEEDEEETDDSDT) the composition is skewed to acidic residues. The tract at residues 831 to 873 (LFEENEEEDEVIDDQEEDEEETDDSDTWEPPRHVKRKLSKSDD) is required for repressor activity. Residues 863-873 (HVKRKLSKSDD) are compositionally biased toward basic residues.

Belongs to the ZHX family. Forms homodimers. Heterodimer (via HD1 domain) with ZHX2 (via HD1 domain). Also forms a heterodimer with ZHX3 which is a prerequisite for repressor activity. Interacts with ATF7IP and NFYA. Interacts (via homeobox domains) with DNMT3B (via PWWP domain).

Its subcellular location is the nucleus. Its function is as follows. Acts as a transcriptional repressor. Increases DNMT3B-mediated repressive transcriptional activity when DNMT3B is tethered to DNA. May link molecule between DNMT3B and other co-repressor proteins. The chain is Zinc fingers and homeoboxes protein 1 (ZHX1) from Pongo pygmaeus (Bornean orangutan).